The following is a 101-amino-acid chain: Apolipoprotein C-III (101 aa).

An N-terminal signal peptide occupies residues 1-20 (MQPRMLLIVALVALLASARA). M64 is modified (methionine sulfoxide). The tract at residues 69–101 (KSLKGYWSKFTDKFTGLWESGPEDQLTTPTLEP) is lipid-binding. O-linked (GalNAc...) threonine glycosylation is present at T96.

The protein belongs to the apolipoprotein C3 family. The most abundant glycoforms are characterized by an O-linked disaccharide galactose linked to N-acetylgalactosamine (Gal-GalNAc), further modified with up to 3 sialic acid residues. Less abundant glycoforms are characterized by more complex and fucosylated glycan moieties. O-glycosylated on Thr-96 with a core 1 or possibly core 8 glycan. As to expression, synthesized predominantly in liver and to a lesser degree in intestine.

The protein localises to the secreted. Its function is as follows. Component of triglyceride-rich very low density lipoproteins (VLDL) and high density lipoproteins (HDL) in plasma. Plays a multifaceted role in triglyceride homeostasis. Intracellularly, promotes hepatic very low density lipoprotein 1 (VLDL1) assembly and secretion; extracellularly, attenuates hydrolysis and clearance of triglyceride-rich lipoproteins (TRLs). Impairs the lipolysis of TRLs by inhibiting lipoprotein lipase and the hepatic uptake of TRLs by remnant receptors. Formed of several curved helices connected via semiflexible hinges, so that it can wrap tightly around the curved micelle surface and easily adapt to the different diameters of its natural binding partners. The chain is Apolipoprotein C-III (Apoc3) from Rattus norvegicus (Rat).